Here is a 283-residue protein sequence, read N- to C-terminus: Bifunctional protein FolD (283 aa).

NADP(+) is bound by residues G166–S168, S191, and I232.

The protein belongs to the tetrahydrofolate dehydrogenase/cyclohydrolase family. Homodimer.

The catalysed reaction is (6R)-5,10-methylene-5,6,7,8-tetrahydrofolate + NADP(+) = (6R)-5,10-methenyltetrahydrofolate + NADPH. The enzyme catalyses (6R)-5,10-methenyltetrahydrofolate + H2O = (6R)-10-formyltetrahydrofolate + H(+). Its pathway is one-carbon metabolism; tetrahydrofolate interconversion. Functionally, catalyzes the oxidation of 5,10-methylenetetrahydrofolate to 5,10-methenyltetrahydrofolate and then the hydrolysis of 5,10-methenyltetrahydrofolate to 10-formyltetrahydrofolate. This is Bifunctional protein FolD from Laribacter hongkongensis (strain HLHK9).